We begin with the raw amino-acid sequence, 176 residues long: Inner membrane-spanning protein YciB (176 aa).

5 consecutive transmembrane segments (helical) span residues 22–42, 50–70, 81–101, 121–141, and 149–169; these read IYYA…YTWL, VALI…YYHN, IYSL…KPLI, IAWA…AFWL, and FKVF…GIYI.

Belongs to the YciB family.

The protein resides in the cell inner membrane. Functionally, plays a role in cell envelope biogenesis, maintenance of cell envelope integrity and membrane homeostasis. This chain is Inner membrane-spanning protein YciB, found in Sodalis glossinidius (strain morsitans).